We begin with the raw amino-acid sequence, 549 residues long: MTSQEYEPIQWSDESQTNNDSVNDAYADVNTTHESRRRTTLQPNSTSQSMIGTLRKYARFIGPGLMVSVSYMDPGNYSTAVAAGSAHRYKLLFSVLVSNFMAAFWQYLCARLGAVTGLDLAQNCKKHLPFGLNITLYILAEMAIIATDLAEVVGTAISLNILFHIPLALGVILTVVDVLIVLLAYKPNGSMKGIRIFEAFVSLLVVLTVVCFTVELFYAKLGPAKEIFSGFLPSKAVFEGDGLYLSLAILGATVMPHSLYLGSGVVQPRLREYDIKNGHYLPDANDMDNNHDNYRPSYEAISETLHFTITELLISLFTVALFVNCAILIVSGATLYGSTQNAEEADLFSIYNLLCSTLSKGAGTVFVLALLFSGQSAGIVCTLSGQMVSEGFLNWTVSPALRRSATRAVAITPCLILVLVAGRSGLSGALNASQVVLSLLLPFVSAPLLYFTSSKKIMRVQLNRTKELSRTTDKKPVADRTEDDETIELEEMGIGSSSQERSLVSPAPEYKDMSNGMIVTVLAIIVWLIISGLNFYMLLGFTTGKEVHL.

The disordered stretch occupies residues 1-23 (MTSQEYEPIQWSDESQTNNDSVN). A compositionally biased stretch (polar residues) spans 12–22 (SDESQTNNDSV). 8 consecutive transmembrane segments (helical) span residues 91–109 (LLFSVLVSNFMAAFWQYLC), 130–147 (FGLNITLYILAEMAIIAT), 161–185 (ILFHIPLALGVILTVVDVLIVLLAY), 196–214 (IFEAFVSLLVVLTVVCFTV), 312–332 (LLISLFTVALFVNCAILIVSG), 350–372 (IYNLLCSTLSKGAGTVFVLALLF), 432–452 (ASQVVLSLLLPFVSAPLLYFT), and 521–541 (VLAIIVWLIISGLNFYMLLGF).

It belongs to the NRAMP family.

It localises to the vacuole lumen. It is found in the vesicle. The protein localises to the cell membrane. It carries out the reaction Mn(2+)(in) = Mn(2+)(out). In terms of biological role, high-affinity manganese transporter involved in manganese uptake from the extracellular environment. The polypeptide is Manganese transporter SMF2 (SMF2) (Saccharomyces cerevisiae (strain ATCC 204508 / S288c) (Baker's yeast)).